Reading from the N-terminus, the 338-residue chain is NADPH dehydrogenase (338 aa).

Tyr-28 is a substrate binding site. 2 residues coordinate FMN: Ala-60 and Gln-102. Residue His-164–His-167 coordinates substrate. FMN-binding positions include Arg-215 and Ala-307 to Arg-308.

Belongs to the NADH:flavin oxidoreductase/NADH oxidase family. NamA subfamily. In terms of assembly, homotetramer. The cofactor is FMN.

The enzyme catalyses A + NADPH + H(+) = AH2 + NADP(+). Catalyzes the reduction of the double bond of an array of alpha,beta-unsaturated aldehydes and ketones. It also reduces the nitro group of nitroester and nitroaromatic compounds. It could have a role in detoxification processes. The chain is NADPH dehydrogenase from Bacillus velezensis (strain DSM 23117 / BGSC 10A6 / LMG 26770 / FZB42) (Bacillus amyloliquefaciens subsp. plantarum).